The sequence spans 157 residues: Endoribonuclease YbeY (157 aa).

Zn(2+) contacts are provided by histidine 112, histidine 116, and histidine 122.

It belongs to the endoribonuclease YbeY family. Zn(2+) is required as a cofactor.

The protein resides in the cytoplasm. Its function is as follows. Single strand-specific metallo-endoribonuclease involved in late-stage 70S ribosome quality control and in maturation of the 3' terminus of the 16S rRNA. In Marinobacter nauticus (strain ATCC 700491 / DSM 11845 / VT8) (Marinobacter aquaeolei), this protein is Endoribonuclease YbeY.